The primary structure comprises 1047 residues: Error-prone DNA polymerase (1047 aa).

It belongs to the DNA polymerase type-C family. DnaE2 subfamily.

It localises to the cytoplasm. The catalysed reaction is DNA(n) + a 2'-deoxyribonucleoside 5'-triphosphate = DNA(n+1) + diphosphate. Functionally, DNA polymerase involved in damage-induced mutagenesis and translesion synthesis (TLS). It is not the major replicative DNA polymerase. The polypeptide is Error-prone DNA polymerase (Methylococcus capsulatus (strain ATCC 33009 / NCIMB 11132 / Bath)).